The chain runs to 1238 residues: uncharacterized protein (1238 aa).

Disordered regions lie at residues 22–83 (LQSA…QEHL), 96–150 (SSRQ…IASP), 169–250 (FEPD…HQML), 264–694 (QLNS…AAMV), 739–915 (TKAA…SVPE), 936–955 (THSA…APHE), and 1057–1089 (PKIS…QCSS). The segment covering 35–49 (QPPNQQPHQTQQQQQ) has biased composition (low complexity). Over residues 58-72 (PSIQNLTTNATPTST) the composition is skewed to polar residues. Low complexity predominate over residues 73–83 (QLQQQQQQEHL). A compositionally biased stretch (polar residues) spans 96 to 110 (SSRQNQGAPSGNLSN). Positions 125–145 (SVSGNTNHTGSNSSSNSGSNN) are enriched in low complexity. Residues 188-204 (SASSASKLPTHNVQQQH) show a composition bias toward polar residues. 3 stretches are compositionally biased toward low complexity: residues 272 to 287 (SYQH…QSHP), 309 to 334 (PLLT…SSQH), and 393 to 406 (SNEE…NSSN). A compositionally biased stretch (polar residues) spans 433–450 (SKPQHPQQAANLNNSCSP). Ser453 carries the phosphoserine modification. Over residues 463 to 472 (PFSTQKQSQT) the composition is skewed to polar residues. A compositionally biased stretch (basic and acidic residues) spans 523–536 (TEQHRMQQDDEPPK). 2 stretches are compositionally biased toward low complexity: residues 549–570 (QSNS…SQSS) and 632–641 (TTAAVAAPPA). A Phosphothreonine modification is found at Thr642. The segment covering 678–688 (ERISSPEKPAE) has biased composition (basic and acidic residues). Phosphoserine occurs at positions 682, 749, and 753. The span at 755-764 (IPQSRSTSTP) shows a compositional bias: polar residues. Phosphoserine occurs at positions 793 and 799. A compositionally biased stretch (low complexity) spans 832–860 (STSAAAAAALAARQLSEAASATKSKPAAG). Basic residues predominate over residues 861-874 (AKKKNAGVKGKKGS). Over residues 937–947 (HSAEDVNEKQT) the composition is skewed to basic and acidic residues. A compositionally biased stretch (polar residues) spans 1071 to 1089 (DSSISYSDDPNESRSQCSS). The C2HC pre-PHD-type; degenerate zinc finger occupies 1089-1131 (SVDLLDCSTESKFVETFRGMGKTSENGFEVWLHEDCAVWSNDI). A Phosphoserine modification is found at Ser1099. The PHD-type zinc finger occupies 1151 to 1199 (YQCVLCQQTGASICCFQRCCKAAAHVPCGRSANWSLSEEDRKVYCHLHR).

This is an uncharacterized protein from Drosophila melanogaster (Fruit fly).